The sequence spans 313 residues: Alpha-S1-casein (313 aa).

A signal peptide spans Met-1 to Ala-15. The segment covering Ala-77 to Ser-96 has biased composition (low complexity). Residues Ala-77–Asn-111 are disordered. A phosphoserine mark is found at Ser-90, Ser-91, Ser-93, Ser-94, Ser-95, and Ser-96. Repeat copies occupy residues Leu-135–Ser-140, Leu-141–Ser-146, Leu-147–Ser-152, Leu-153–Ser-158, Leu-159–Ser-164, Leu-165–Ser-170, Leu-171–Ser-176, Met-177–Ser-182, Leu-183–Leu-188, Leu-189–Ser-194, Leu-195–Ser-200, Pro-201–Ser-206, Leu-207–Phe-212, Leu-213–Ser-218, and Leu-219–His-224. A 15 X 6 AA tandem repeats region spans residues Leu-135 to His-224.

The protein belongs to the alpha-casein family. Mammary gland specific. Secreted in milk.

It localises to the secreted. In terms of biological role, important role in the capacity of milk to transport calcium phosphate. The sequence is that of Alpha-S1-casein (Csn1s1) from Mus musculus (Mouse).